The primary structure comprises 122 residues: Large ribosomal subunit protein uL14 (122 aa).

This sequence belongs to the universal ribosomal protein uL14 family. Part of the 50S ribosomal subunit. Forms a cluster with proteins L3 and L19. In the 70S ribosome, L14 and L19 interact and together make contacts with the 16S rRNA in bridges B5 and B8.

Binds to 23S rRNA. Forms part of two intersubunit bridges in the 70S ribosome. This chain is Large ribosomal subunit protein uL14, found in Salinispora tropica (strain ATCC BAA-916 / DSM 44818 / JCM 13857 / NBRC 105044 / CNB-440).